A 277-amino-acid polypeptide reads, in one-letter code: 2-dehydro-3-deoxyphosphooctonate aldolase (277 aa).

Belongs to the KdsA family.

Its subcellular location is the cytoplasm. The enzyme catalyses D-arabinose 5-phosphate + phosphoenolpyruvate + H2O = 3-deoxy-alpha-D-manno-2-octulosonate-8-phosphate + phosphate. It functions in the pathway carbohydrate biosynthesis; 3-deoxy-D-manno-octulosonate biosynthesis; 3-deoxy-D-manno-octulosonate from D-ribulose 5-phosphate: step 2/3. The protein operates within bacterial outer membrane biogenesis; lipopolysaccharide biosynthesis. The sequence is that of 2-dehydro-3-deoxyphosphooctonate aldolase (kdsA) from Mesorhizobium japonicum (strain LMG 29417 / CECT 9101 / MAFF 303099) (Mesorhizobium loti (strain MAFF 303099)).